A 481-amino-acid chain; its full sequence is uncharacterized protein (481 aa).

A run of 10 helical transmembrane segments spans residues 32–52 (LSWL…YWGV), 82–102 (FFHW…IMAY), 137–157 (MFLI…AATF), 173–193 (VQAF…WIGI), 204–224 (VGWG…TEFI), 258–278 (WTVF…MFVT), 289–309 (VIWG…GVME), 348–368 (LFLA…MDAV), 392–412 (LFWC…GASL), and 418–438 (TVVL…GGFI).

It belongs to the BCCT transporter (TC 2.A.15) family.

The protein resides in the cell inner membrane. In terms of biological role, probable transporter whose substrate is unknown. Is not involved in aerobic D-malate transport. This is an uncharacterized protein from Escherichia coli (strain K12).